The primary structure comprises 213 residues: Small ribosomal subunit protein eS6 (213 aa).

The protein belongs to the eukaryotic ribosomal protein eS6 family.

This Sulfolobus acidocaldarius (strain ATCC 33909 / DSM 639 / JCM 8929 / NBRC 15157 / NCIMB 11770) protein is Small ribosomal subunit protein eS6.